We begin with the raw amino-acid sequence, 294 residues long: Fatty acyl-CoA reductase Rv0547c (294 aa).

Positions 49, 50, 52, 72, 97, 98, 124, 192, 196, 225, and 227 each coordinate NADP(+). Tyrosine 192 serves as the catalytic Proton acceptor.

The protein belongs to the short-chain dehydrogenases/reductases (SDR) family.

The protein localises to the host mitochondrion. The enzyme catalyses hexadecanal + NADP(+) + CoA = hexadecanoyl-CoA + NADPH + H(+). In terms of biological role, oxidoreductase that promotes the persistence of M.tuberculosis in host macrophages by reprogramming the fatty acid metabolism in host mitochondria. When localized in the host mitochondria, it potentially acts on unknown lipid substrates and converts them into products that directly or indirectly alter the lipid profile of the mitochondria. This change in lipid profile results in increased mitochondrial membrane fluidity, enhanced endogenous fatty acid oxidation and increased mitochondrial spare respiratory capacity. All these events eventually favor M.tuberculosis persistence in the host macrophages. In vitro, can catalyze the NADPH-dependent reduction of palmitoyl-CoA (hexadecanoyl-CoA). The chain is Fatty acyl-CoA reductase Rv0547c from Mycobacterium tuberculosis (strain ATCC 25618 / H37Rv).